The chain runs to 581 residues: Ezrin (581 aa).

In terms of domain architecture, FERM spans 2 to 295; sequence PKPINVRVTT…GNHELYMRRR (294 aa). Lys60 carries the N6-acetyllysine modification. The short motif at 115-120 is the [IL]-x-C-x-x-[DE] motif element; the sequence is IYCPPE. Tyr146 bears the Phosphotyrosine; by PDGFR mark. The tract at residues 244–581 is interaction with SCYL3; it reads EIRNISFNDK…KQRIDEFEAM (338 aa). Residues 302 to 462 are a coiled coil; the sequence is VQQMKAQARE…QDDLVKTREE (161 aa). The interval 306–341 is disordered; that stretch reads KAQAREEKHQKQLERQQLETEKKRRETVEREKEQMM. Over residues 308 to 341 the composition is skewed to basic and acidic residues; it reads QAREEKHQKQLERQQLETEKKRRETVEREKEQMM. Tyr354 carries the phosphotyrosine; by PDGFR modification. At Ser366 the chain carries Phosphoserine. The residue at position 476 (Tyr476) is a Phosphotyrosine. Positions 534–560 are disordered; the sequence is SQARDENKRTHNDIIHNENMRQGRDKY. Residues 535-560 are compositionally biased toward basic and acidic residues; that stretch reads QARDENKRTHNDIIHNENMRQGRDKY. Thr562 carries the phosphothreonine; by ROCK2 and PKC/PRKCI modification.

In terms of assembly, interacts with PALS1 and NHERF2. Found in a complex with EZR, PODXL and NHERF2. Interacts with MCC, PLEKHG6, PODXL, SCYL3/PACE1, NHERF1 and TMEM8B. Interacts (when phosphorylated) with FES/FPS. Interacts with dimeric S100P, the interaction may be activating through unmasking of F-actin binding sites. Identified in complexes that contain VIM, EZR, AHNAK, BFSP1, BFSP2, ANK2, PLEC, PRX and spectrin. Detected in a complex composed of at least EZR, AHNAK, PPL and PRX. Interacts with PDPN (via cytoplasmic domain); activates RHOA and promotes epithelial-mesenchymal transition. Interacts with SPN/CD43 cytoplasmic tail, CD44 and ICAM2. Interacts with SLC9A3; interaction targets SLC9A3 to the apical membrane. Interacts with SLC9A1; regulates interactions of SLC9A1 with cytoskeletal and promotes stress fiber formation. Interacts with CLIC5; may work together in a complex which also includes RDX and MYO6 to stabilize linkages between the plasma membrane and subjacent actin cytoskeleton at the base of stereocilia. In terms of processing, phosphorylated by tyrosine-protein kinases. Phosphorylation by ROCK2 suppresses the head-to-tail association of the N-terminal and C-terminal halves resulting in an opened conformation which is capable of actin and membrane-binding. Post-translationally, S-nitrosylation is induced by interferon-gamma and oxidatively-modified low-densitity lipoprotein (LDL(ox)) possibly implicating the iNOS-S100A8/9 transnitrosylase complex. In terms of tissue distribution, detected in eye lens fiber cells (at protein level).

The protein localises to the apical cell membrane. It is found in the cell projection. Its subcellular location is the microvillus membrane. It localises to the ruffle membrane. The protein resides in the cytoplasm. The protein localises to the cell cortex. It is found in the cytoskeleton. Its subcellular location is the microvillus. A head-to-tail association, of the N-terminal and C-terminal halves results in a closed conformation (inactive form) which is incapable of actin or membrane-binding. In terms of biological role, probably involved in connections of major cytoskeletal structures to the plasma membrane. In epithelial cells, required for the formation of microvilli and membrane ruffles on the apical pole. Along with PLEKHG6, required for normal macropinocytosis. The chain is Ezrin (EZR) from Bos taurus (Bovine).